The sequence spans 395 residues: S-adenosylmethionine synthase (395 aa).

H15 is a binding site for ATP. Mg(2+) is bound at residue D17. E43 contributes to the K(+) binding site. Q99 provides a ligand contact to L-methionine. Residues 99–109 (QSPDIAMGVNE) form a flexible loop region. ATP contacts are provided by residues 174-176 (DGK), 240-241 (RF), D249, 255-256 (RK), A272, and K276. D249 is an L-methionine binding site. An L-methionine-binding site is contributed by K280.

The protein belongs to the AdoMet synthase family. In terms of assembly, homotetramer; dimer of dimers. Requires Mg(2+) as cofactor. The cofactor is K(+).

It localises to the cytoplasm. The enzyme catalyses L-methionine + ATP + H2O = S-adenosyl-L-methionine + phosphate + diphosphate. It participates in amino-acid biosynthesis; S-adenosyl-L-methionine biosynthesis; S-adenosyl-L-methionine from L-methionine: step 1/1. In terms of biological role, catalyzes the formation of S-adenosylmethionine (AdoMet) from methionine and ATP. The overall synthetic reaction is composed of two sequential steps, AdoMet formation and the subsequent tripolyphosphate hydrolysis which occurs prior to release of AdoMet from the enzyme. The chain is S-adenosylmethionine synthase from Moorella thermoacetica (strain ATCC 39073 / JCM 9320).